The sequence spans 94 residues: Small ribosomal subunit protein uS19c (94 aa).

The protein belongs to the universal ribosomal protein uS19 family.

Its subcellular location is the plastid. It localises to the chloroplast. Its function is as follows. Protein S19 forms a complex with S13 that binds strongly to the 16S ribosomal RNA. This is Small ribosomal subunit protein uS19c from Pleurastrum terricola (Filamentous green alga).